The primary structure comprises 372 residues: Non-structural protein NS2 (372 aa).

The tract at residues 259-326 (NQIEKQHTTH…QESEPESPSF (68 aa)) is disordered. Residues 299-309 (TETTSTSSSHH) show a composition bias toward low complexity.

The protein is Non-structural protein NS2 (NS) of Aedes albopictus (Asian tiger mosquito).